The sequence spans 232 residues: DASH complex subunit DUO1 (232 aa).

2 disordered regions span residues 1–44 and 133–232; these read MADE…GGMR and ERRR…RGAK. Positions 128–171 form a coiled coil; the sequence is ELEAEERRRQEEVERRAAEAERRREEARRKAEEEERRRAAAAAA. The span at 133-165 shows a compositional bias: basic and acidic residues; the sequence is ERRRQEEVERRAAEAERRREEARRKAEEEERRR. Composition is skewed to low complexity over residues 167–183 and 191–213; these read AAAA…VGRG and GSGL…TTSG.

Belongs to the DASH complex DUO1 family. In terms of assembly, component of the DASH complex consisting of ASK1, DAD1, DAD2, DAD3, DAD4, DAM1, DUO1, HSK3, SPC19 and SPC34, with a stoichiometry of one copy of each subunit per complex. Multiple DASH complexes oligomerize to form a ring that encircles spindle microtubules and organizes the rod-like NDC80 complexes of the outer kinetochore. DASH complex oligomerization strengthens microtubule attachments. On cytoplasmic microtubules, DASH complexes appear to form patches instead of rings.

Its subcellular location is the nucleus. The protein resides in the cytoplasm. The protein localises to the cytoskeleton. It is found in the spindle pole. It localises to the chromosome. Its subcellular location is the centromere. The protein resides in the kinetochore. Functionally, component of the DASH complex that connects microtubules with kinetochores and couples microtubule depolymerisation to chromosome movement; it is involved in retrieving kinetochores to the spindle poles before their re-orientation on the spindle in early mitosis and allows microtubule depolymerization to pull chromosomes apart and resist detachment during anaphase. Kinetochores, consisting of a centromere-associated inner segment and a microtubule-contacting outer segment, play a crucial role in chromosome segregation by mediating the physical connection between centromeric DNA and microtubules. Kinetochores also serve as an input point for the spindle assembly checkpoint, which delays anaphase until all chromosomes have bioriented on the mitotic spindle. In Chaetomium thermophilum (strain DSM 1495 / CBS 144.50 / IMI 039719) (Thermochaetoides thermophila), this protein is DASH complex subunit DUO1.